The following is a 157-amino-acid chain: Transcription antitermination protein NusB (157 aa).

Belongs to the NusB family.

Involved in transcription antitermination. Required for transcription of ribosomal RNA (rRNA) genes. Binds specifically to the boxA antiterminator sequence of the ribosomal RNA (rrn) operons. The chain is Transcription antitermination protein NusB from Xylella fastidiosa (strain Temecula1 / ATCC 700964).